The primary structure comprises 242 residues: Murein peptide amidase A (242 aa).

In terms of domain architecture, Peptidase M14 spans 1 to 234; it reads MTVTRPRAER…FAMANLLRWH (234 aa). 3 residues coordinate Zn(2+): histidine 49, glutamate 52, and histidine 157. The active-site Proton donor/acceptor is the glutamate 210.

This sequence belongs to the peptidase M14 family. As to quaternary structure, homodimer. The cofactor is Zn(2+).

It is found in the cytoplasm. It carries out the reaction L-alanyl-gamma-D-glutamyl-meso-2,6-diaminopimelate + H2O = L-alanyl-D-glutamate + meso-2,6-diaminopimelate. Its pathway is cell wall degradation; peptidoglycan degradation. Involved in muropeptide degradation. Catalyzes the hydrolysis of the gamma-D-glutamyl-diaminopimelic acid (gamma-D-Glu-Dap) amide bond in the murein tripeptide L-alanyl-gamma-D-glutamyl-meso-diaminopimelic acid, leading to the formation of L-Ala-gamma-D-Glu and Dap. In Escherichia coli O157:H7, this protein is Murein peptide amidase A.